The chain runs to 1172 residues: MALQNKEEEKKKVKKLQKSYFDVLGICCTSEVPIIENILKSLDGVKEYSVIVPSRTVIVVHDSLLISPFQIAKALNEARLEANVRVNGETSFKNKWPSPFAVVSGLLLLLSFLKFVYSPLRWLAVAAVAAGIYPILAKAFASIKRPRIDINILVIITVIATLAMQDFMEAAAVVFLFTISDWLETRASYKATSVMQSLMSLAPQKAIIAETGEEVEVDEVKVDTVVAVKAGETIPIDGIVVDGNCEVDEKTLTGEAFPVPKQRDSTVWAGTINLNGYICVKTTSLAGDCVVAKMAKLVEEAQSSKTKSQRLIDKCSQYYTPAIILVSACVAIVPVIMKVHNLKHWFHLALVVLVSGCPCGLILSTPVATFCALTKAATSGLLIKSADYLDTLSKIKIVAFDKTGTITRGEFIVIDFKSLSRDINLRSLLYWVSSVESKSSHPMAATIVDYAKSVSVEPRPEEVEDYQNFPGEGIYGKIDGNDIFIGNKKIASRAGCSTVPEIEVDTKGGKTVGYVYVGERLAGFFNLSDACRSGVSQAMAELKSLGIKTAMLTGDNQAAAMHAQEQLGNVLDVVHGDLLPEDKSRIIQEFKKEGPTAMVGDGVNDAPALATADIGISMGISGSALATQTGNIILMSNDIRRIPQAVKLARRARRKVVENVCLSIILKAGILALAFAGHPLIWAAVLVDVGTCLLVIFNSMLLLREKKKIGNKKCYRASTSKLNGRKLEGDDDYVVDLEAGLLTKSGNGQCKSSCCGDKKNQENVVMMKPSSKTSSDHSHPGCCGDKKEEKVKPLVKDGCCSEKTRKSEGDMVSLSSCKKSSHVKHDLKMKGGSGCCASKNEKGKEVVAKSCCEKPKQQVESVGDCKSGHCEKKKQAEDIVVPVQIIGHALTHVEIELQTKETCKTSCCDSKEKVKETGLLLSSENTPYLEKGVLIKDEGNCKSGSENMGTVKQSCHEKGCSDEKQTGEITLASEEETDDQDCSSGCCVNEGTVKQSFDEKKHSVLVEKEGLDMETGFCCDAKLVCCGNTEGEVKEQCRLEIKKEEHCKSGCCGEEIQTGEITLVSEEETESTNCSTGCCVDKEEVTQTCHEKPASLVVSGLEVKKDEHCESSHRAVKVETCCKVKIPEACASKCRDRAKRHSGKSCCRSYAKELCSHRHHHHHHHHHHHVSA.

Residues 1–93 (MALQNKEEEK…VRVNGETSFK (93 aa)) lie on the Cytoplasmic side of the membrane. The HMA domain occupies 17-83 (QKSYFDVLGI…ALNEARLEAN (67 aa)). The chain crosses the membrane as a helical span at residues 94 to 115 (NKWPSPFAVVSGLLLLLSFLKF). The Extracellular segment spans residues 116-118 (VYS). A helical transmembrane segment spans residues 119-138 (PLRWLAVAAVAAGIYPILAK). Residues 139 to 145 (AFASIKR) are Cytoplasmic-facing. Residues 146 to 166 (PRIDINILVIITVIATLAMQD) traverse the membrane as a helical segment. A topological domain (extracellular) is located at residue phenylalanine 167. Residues 168-188 (MEAAAVVFLFTISDWLETRAS) form a helical membrane-spanning segment. The Cytoplasmic segment spans residues 189–314 (YKATSVMQSL…KTKSQRLIDK (126 aa)). The chain crosses the membrane as a helical span at residues 315 to 337 (CSQYYTPAIILVSACVAIVPVIM). The Extracellular portion of the chain corresponds to 338–345 (KVHNLKHW). A helical membrane pass occupies residues 346–363 (FHLALVVLVSGCPCGLIL). Residues 364-656 (STPVATFCAL…KLARRARRKV (293 aa)) are Cytoplasmic-facing. Aspartate 401 functions as the 4-aspartylphosphate intermediate in the catalytic mechanism. 2 residues coordinate Mg(2+): aspartate 601 and aspartate 605. A helical transmembrane segment spans residues 657–676 (VENVCLSIILKAGILALAFA). The Extracellular segment spans residues 677-680 (GHPL). The chain crosses the membrane as a helical span at residues 681–700 (IWAAVLVDVGTCLLVIFNSM). Topologically, residues 701–1172 (LLLREKKKIG…HHHHHHHVSA (472 aa)) are cytoplasmic.

It belongs to the cation transport ATPase (P-type) (TC 3.A.3) family. Type IB subfamily.

The protein localises to the membrane. The enzyme catalyses Zn(2+)(in) + ATP + H2O = Zn(2+)(out) + ADP + phosphate + H(+). The catalysed reaction is Cd(2+)(in) + ATP + H2O = Cd(2+)(out) + ADP + phosphate + H(+). In terms of biological role, involved in cadmium/zinc transport. The polypeptide is Putative cadmium/zinc-transporting ATPase HMA4 (HMA4) (Arabidopsis thaliana (Mouse-ear cress)).